The primary structure comprises 61 residues: Small ribosomal subunit protein uS14 (61 aa).

4 residues coordinate Zn(2+): cysteine 24, cysteine 27, cysteine 40, and cysteine 43.

Belongs to the universal ribosomal protein uS14 family. Zinc-binding uS14 subfamily. As to quaternary structure, part of the 30S ribosomal subunit. Contacts proteins S3 and S10. Requires Zn(2+) as cofactor.

Binds 16S rRNA, required for the assembly of 30S particles and may also be responsible for determining the conformation of the 16S rRNA at the A site. The polypeptide is Small ribosomal subunit protein uS14 (Trichlorobacter lovleyi (strain ATCC BAA-1151 / DSM 17278 / SZ) (Geobacter lovleyi)).